Here is a 246-residue protein sequence, read N- to C-terminus: MVARLTTLLVCLVFSLATLVQRGYGDFDDFNLEDALKETSSVKQSHFSTTTRRTGTTRAPANPAERWDHMTTTTTKRPGTTRAPSNPLELDGFDLEDALDDRNDLDGPKKPSTGEGGGLSDKDLEDILGGGGYKPDKNKGGGGGYGSQDDPGSGAVTDPGTIAGLVSALAAALLGAVSGYLSYQHRKFCFSVQRGLDAAYVKGENLEAVVCEEPRVEAAMCEAPPVTDSTQHSQPTEPLAPERPRI.

The signal sequence occupies residues 1–25; sequence MVARLTTLLVCLVFSLATLVQRGYG. Over 26 to 160 the chain is Extracellular; the sequence is DFDDFNLEDA…PGSGAVTDPG (135 aa). The disordered stretch occupies residues 43 to 156; that stretch reads KQSHFSTTTR…SQDDPGSGAV (114 aa). Low complexity-rich tracts occupy residues 49–58 and 71–81; these read TTTRRTGTTR and TTTTTKRPGTT. Residues 100 to 109 are compositionally biased toward basic and acidic residues; the sequence is DDRNDLDGPK. Ser153 carries O-linked (Xyl...) (chondroitin sulfate) serine glycosylation. The chain crosses the membrane as a helical span at residues 161–181; it reads TIAGLVSALAAALLGAVSGYL. Residues 182-246 lie on the Cytoplasmic side of the membrane; sequence SYQHRKFCFS…EPLAPERPRI (65 aa). The disordered stretch occupies residues 223–246; the sequence is APPVTDSTQHSQPTEPLAPERPRI. Residues 227-236 show a composition bias toward polar residues; it reads TDSTQHSQPT.

The protein belongs to the CD99 family. Post-translationally, O-glycosylated. As to expression, expressed predominantly in the ventral medullary surface of the brain, moderate expression in the cerebral cortex and cerebellum. Low expression in lung and kidney. No expression in heart, stomach, intestine and skeletal muscle.

It localises to the cell membrane. Its subcellular location is the cell junction. The protein localises to the secreted. Functionally, plays a role in a late step of leukocyte extravasation helping cells to overcome the endothelial basement membrane. Acts at the same site as, but independently of, PECAM1. Homophilic adhesion molecule, but these interactions may not be required for cell aggregation. The protein is CD99 antigen-like protein 2 (Cd99l2) of Rattus norvegicus (Rat).